A 310-amino-acid polypeptide reads, in one-letter code: Bis(hydroxyethyl) terephthalate hydrolase (310 aa).

Residues 1–48 constitute a signal peptide (tat-type signal); that stretch reads MQQNPHTHAAPGAARPVLRGVRRRLAAVTAAVAAVLVLGTLTGPGAQA. A bis(2-hydroxyethyl) terephthalate-binding site is contributed by phenylalanine 111. Serine 179 (nucleophile) is an active-site residue. Positions 180 and 204 each coordinate bis(2-hydroxyethyl) terephthalate. Catalysis depends on charge relay system residues aspartate 225 and histidine 257. A disulfide bond links cysteine 290 and cysteine 306.

This sequence belongs to the AB hydrolase superfamily. In terms of processing, predicted to be exported by the Tat system. The position of the signal peptide cleavage has not been experimentally proven.

It is found in the secreted. It catalyses the reaction bis(2-hydroxyethyl) terephthalate + H2O = 4-[(2-hydroxyethoxy)carbonyl]benzoate + ethylene glycol + H(+). In terms of biological role, catalyzes the degradation of bis(hydroxyethyl) terephthalate (BHET), a derived-oligomer of the plastic poly(ethylene terephthalate) (PET), hydrolyzing BHET to mono(2-hydroxyethyl) terephthalate (MHET). Shows no activity against PET. The chain is Bis(hydroxyethyl) terephthalate hydrolase from Streptomyces coelicolor (strain ATCC BAA-471 / A3(2) / M145).